The chain runs to 274 residues: MAINPITRNKIKDYLNSFIQQQLSVYRERSLREFQDVDSYLPSLSKDGDLKPFHASLIPASIMRLNRFERSLSTGLGSTFEECTRLIALDHHAVALRNYDIQAALDQAQWAAIDQLISIIDRGLKHQTPSLNQMLEQIQSIPLTGILETHIVRADLYIQRHDGSELFFEIKSPKPNKGQCLEVMQRLLRIYTIKQQSAVPVKAFYAMAYNPWGISRASYRSSNTKKYTDFSNAVVIGQEFWSLIGEPSTYTELLEIYHEVGLAKSAEITQKLLQ.

It belongs to the TdeIII type II restriction endonuclease family.

It catalyses the reaction Endonucleolytic cleavage of DNA to give specific double-stranded fragments with terminal 5'-phosphates.. Its function is as follows. A P subtype restriction enzyme that recognizes the double-stranded sequence 5'-GGWCC-3' and cleaves after G-1. This system is more active than isoschizomeric RM.HgiBI. The sequence is that of Type II restriction enzyme HgiEI from Herpetosiphon aurantiacus (Herpetosiphon giganteus).